Reading from the N-terminus, the 188-residue chain is UPF0398 protein BBR47_29830 (188 aa).

It belongs to the UPF0398 family.

In Brevibacillus brevis (strain 47 / JCM 6285 / NBRC 100599), this protein is UPF0398 protein BBR47_29830.